A 289-amino-acid polypeptide reads, in one-letter code: Phosphatidylserine decarboxylase proenzyme (289 aa).

Active-site charge relay system; for autoendoproteolytic cleavage activity residues include D89, H146, and S252. S252 acts as the Schiff-base intermediate with substrate; via pyruvic acid; for decarboxylase activity in catalysis. Residue S252 is modified to Pyruvic acid (Ser); by autocatalysis.

It belongs to the phosphatidylserine decarboxylase family. PSD-B subfamily. Prokaryotic type I sub-subfamily. Heterodimer of a large membrane-associated beta subunit and a small pyruvoyl-containing alpha subunit. Requires pyruvate as cofactor. Is synthesized initially as an inactive proenzyme. Formation of the active enzyme involves a self-maturation process in which the active site pyruvoyl group is generated from an internal serine residue via an autocatalytic post-translational modification. Two non-identical subunits are generated from the proenzyme in this reaction, and the pyruvate is formed at the N-terminus of the alpha chain, which is derived from the carboxyl end of the proenzyme. The autoendoproteolytic cleavage occurs by a canonical serine protease mechanism, in which the side chain hydroxyl group of the serine supplies its oxygen atom to form the C-terminus of the beta chain, while the remainder of the serine residue undergoes an oxidative deamination to produce ammonia and the pyruvoyl prosthetic group on the alpha chain. During this reaction, the Ser that is part of the protease active site of the proenzyme becomes the pyruvoyl prosthetic group, which constitutes an essential element of the active site of the mature decarboxylase.

The protein localises to the cell membrane. It carries out the reaction a 1,2-diacyl-sn-glycero-3-phospho-L-serine + H(+) = a 1,2-diacyl-sn-glycero-3-phosphoethanolamine + CO2. It participates in phospholipid metabolism; phosphatidylethanolamine biosynthesis; phosphatidylethanolamine from CDP-diacylglycerol: step 2/2. In terms of biological role, catalyzes the formation of phosphatidylethanolamine (PtdEtn) from phosphatidylserine (PtdSer). The polypeptide is Phosphatidylserine decarboxylase proenzyme (Shewanella sp. (strain W3-18-1)).